A 138-amino-acid polypeptide reads, in one-letter code: Type II secretion system protein I (138 aa).

The propeptide at 1 to 6 (MKHQRG) is leader sequence. Position 7 is an N-methyltyrosine (Y7). A helical transmembrane segment spans residues 7 to 29 (YSLIEVIVAFALLALALTLLLGS).

Belongs to the GSP I family. Type II secretion is composed of four main components: the outer membrane complex, the inner membrane complex, the cytoplasmic secretion ATPase and the periplasm-spanning pseudopilus. Interacts with core component XpsG. In terms of processing, cleaved by prepilin peptidase. Methylated by prepilin peptidase at the amino group of the N-terminal tyrosine once the leader sequence is cleaved by prepilin peptidase.

It localises to the cell inner membrane. Functionally, component of the type II secretion system required for the energy-dependent secretion of extracellular factors such as proteases and toxins from the periplasm. Part of the pseudopilus tip complex that is critical for the recognition and binding of secretion substrates. The chain is Type II secretion system protein I (xpsI) from Xanthomonas campestris pv. campestris (strain ATCC 33913 / DSM 3586 / NCPPB 528 / LMG 568 / P 25).